Reading from the N-terminus, the 170-residue chain is Cathelicidin antimicrobial peptide (170 aa).

Positions methionine 1–alanine 30 are cleaved as a signal peptide. Residues glutamine 31 to arginine 131 constitute a propeptide, cathelin-like domain (CLD). Cystine bridges form between cysteine 86–cysteine 97 and cysteine 108–cysteine 125. The segment at leucine 150–glycine 162 is active core.

It belongs to the cathelicidin family. In terms of assembly, monomer, homodimer or homotrimer (in vitro). Oligomerizes as tetra- or hexamer in solution (in vitro). Proteolytically cleaved by proteinase PRTN3 into antibacterial peptide LL-37. Proteolytically cleaved by cathepsin CTSG and neutrophil elastase ELANE. In terms of processing, resistant to proteolytic degradation in solution, and when bound to both zwitterionic (mimicking mammalian membranes) and negatively charged membranes (mimicking bacterial membranes). Post-translationally, after secretion onto the skin surface, the CAMP gene product is processed by a serine protease-dependent mechanism into multiple novel antimicrobial peptides distinct from and shorter than cathelicidin LL-37. These peptides show enhanced antimicrobial action, acquiring the ability to kill skin pathogens such as S.aureus, E.coli and C.albicans. These peptides have lost the ability to stimulate CXCL8/IL8 release from keratinocytes. The peptides act synergistically, killing bacteria at lower concentrations when present together, and maintain activity at increased salt condition.

The protein resides in the secreted. It is found in the vesicle. Antimicrobial protein that is an integral component of the innate immune system. Binds to bacterial lipopolysaccharides (LPS). Acts via neutrophil N-formyl peptide receptors to enhance the release of CXCL2. Postsecretory processing generates multiple cathelicidin antimicrobial peptides with various lengths which act as a topical antimicrobial defense in sweat on skin. The unprocessed precursor form, cathelicidin antimicrobial peptide, inhibits the growth of Gram-negative E.coli and E.aerogenes with efficiencies comparable to that of the mature peptide LL-37 (in vitro). Functionally, antimicrobial peptide that is an integral component of the innate immune system. Binds to bacterial lipopolysaccharides (LPS). Causes membrane permeabilization by forming transmembrane pores (in vitro). Causes lysis of E.coli. Exhibits antimicrobial activity against Gram-negative bacteria such as P.aeruginosa, S.typhimurium, E.aerogenes, E.coli and P.syringae, Gram-positive bacteria such as L.monocytogenes, S.epidermidis, S.pyogenes and S.aureus, as well as vancomycin-resistant enterococci (in vitro). Exhibits antimicrobial activity against methicillin-resistant S.aureus, P.mirabilis, and C.albicans in low-salt media, but not in media containing 100 mM NaCl (in vitro). Forms chiral supramolecular assemblies with quinolone signal (PQS) molecules of P.aeruginosa, which may lead to interference of bacterial quorum signaling and perturbance of bacterial biofilm formation. May form supramolecular fiber-like assemblies on bacterial membranes. Induces cytokine and chemokine producation as well as TNF/TNFA and CSF2/GMCSF production in normal human keratinocytes. Exhibits hemolytic activity against red blood cells. In terms of biological role, exhibits antimicrobial activity against E.coli and B.megaterium (in vitro). The sequence is that of Cathelicidin antimicrobial peptide from Chlorocebus aethiops (Green monkey).